The sequence spans 158 residues: S-ribosylhomocysteine lyase (158 aa).

Fe cation-binding residues include histidine 55, histidine 59, and cysteine 127.

This sequence belongs to the LuxS family. As to quaternary structure, homodimer. Fe cation serves as cofactor.

The enzyme catalyses S-(5-deoxy-D-ribos-5-yl)-L-homocysteine = (S)-4,5-dihydroxypentane-2,3-dione + L-homocysteine. In terms of biological role, involved in the synthesis of autoinducer 2 (AI-2) which is secreted by bacteria and is used to communicate both the cell density and the metabolic potential of the environment. The regulation of gene expression in response to changes in cell density is called quorum sensing. Catalyzes the transformation of S-ribosylhomocysteine (RHC) to homocysteine (HC) and 4,5-dihydroxy-2,3-pentadione (DPD). This chain is S-ribosylhomocysteine lyase, found in Geobacillus thermodenitrificans (strain NG80-2).